Consider the following 150-residue polypeptide: 6,7-dimethyl-8-ribityllumazine synthase (150 aa).

5-amino-6-(D-ribitylamino)uracil is bound by residues Phe11, 43–45 (VYD), and 67–69 (AVI). 72-73 (AT) provides a ligand contact to (2S)-2-hydroxy-3-oxobutyl phosphate. His75 (proton donor) is an active-site residue. Leu100 contacts 5-amino-6-(D-ribitylamino)uracil. Arg115 is a binding site for (2S)-2-hydroxy-3-oxobutyl phosphate.

The protein belongs to the DMRL synthase family.

The catalysed reaction is (2S)-2-hydroxy-3-oxobutyl phosphate + 5-amino-6-(D-ribitylamino)uracil = 6,7-dimethyl-8-(1-D-ribityl)lumazine + phosphate + 2 H2O + H(+). The protein operates within cofactor biosynthesis; riboflavin biosynthesis; riboflavin from 2-hydroxy-3-oxobutyl phosphate and 5-amino-6-(D-ribitylamino)uracil: step 1/2. Functionally, catalyzes the formation of 6,7-dimethyl-8-ribityllumazine by condensation of 5-amino-6-(D-ribitylamino)uracil with 3,4-dihydroxy-2-butanone 4-phosphate. This is the penultimate step in the biosynthesis of riboflavin. The polypeptide is 6,7-dimethyl-8-ribityllumazine synthase (Pyrobaculum neutrophilum (strain DSM 2338 / JCM 9278 / NBRC 100436 / V24Sta) (Thermoproteus neutrophilus)).